The chain runs to 71 residues: Large ribosomal subunit protein uL29 (71 aa).

Belongs to the universal ribosomal protein uL29 family.

This is Large ribosomal subunit protein uL29 from Rickettsia akari (strain Hartford).